Reading from the N-terminus, the 434-residue chain is Ribosomal RNA-processing protein 14 (434 aa).

Serine 2 carries the post-translational modification N-acetylserine. 3 stretches are compositionally biased toward basic and acidic residues: residues lysine 32–glutamate 58, valine 70–lysine 79, and lysine 95–glycine 105. The interval lysine 32–glutamate 257 is disordered. The span at proline 121–asparagine 140 shows a compositional bias: acidic residues. Residues leucine 144 to arginine 178 are compositionally biased toward basic and acidic residues. 2 coiled-coil regions span residues isoleucine 162–serine 230 and alanine 293–lysine 360. The span at glutamate 220–leucine 241 shows a compositional bias: acidic residues. Positions threonine 375–aspartate 392 are enriched in basic and acidic residues. Positions threonine 375–lysine 434 are disordered. Basic residues-rich tracts occupy residues asparagine 393–tyrosine 408 and lysine 425–lysine 434.

It belongs to the SURF6 family. In terms of assembly, component of the 90S and 60S pre-ribosomal particles.

The protein localises to the nucleus. The protein resides in the nucleolus. Involved in ribosome biogenesis and cell polarity. Required for the synthesis of both 40S and 60S ribosomal subunits and may also play some direct role in correct positioning of the mitotic spindle during mitosis. The protein is Ribosomal RNA-processing protein 14 (RRP14) of Saccharomyces cerevisiae (strain ATCC 204508 / S288c) (Baker's yeast).